We begin with the raw amino-acid sequence, 229 residues long: Probable endo-1,4-beta-xylanase A (229 aa).

Residues 1-18 form the signal peptide; the sequence is MVSFKYLFLAASALGALA. Asn30 and Asn100 each carry an N-linked (GlcNAc...) asparagine glycan. The GH11 domain maps to 41-229; that stretch reads AGTPSSTGWN…SSGSSSITVY (189 aa). Glu125 serves as the catalytic Nucleophile. Glu216 serves as the catalytic Proton donor.

Belongs to the glycosyl hydrolase 11 (cellulase G) family.

Its subcellular location is the secreted. The enzyme catalyses Endohydrolysis of (1-&gt;4)-beta-D-xylosidic linkages in xylans.. The protein operates within glycan degradation; xylan degradation. Endo-1,4-beta-xylanase involved in the hydrolysis of xylan, a major structural heterogeneous polysaccharide found in plant biomass representing the second most abundant polysaccharide in the biosphere, after cellulose. The protein is Probable endo-1,4-beta-xylanase A (xlnA) of Aspergillus clavatus (strain ATCC 1007 / CBS 513.65 / DSM 816 / NCTC 3887 / NRRL 1 / QM 1276 / 107).